The primary structure comprises 512 residues: Sucrose-6-phosphate hydrolase (512 aa).

Residues 40–43 (WMND), glutamine 59, tryptophan 67, 102–103 (FS), 165–166 (RD), glutamate 229, and tryptophan 311 contribute to the substrate site. The active site involves aspartate 43.

Belongs to the glycosyl hydrolase 32 family.

It localises to the cytoplasm. The catalysed reaction is Hydrolysis of terminal non-reducing beta-D-fructofuranoside residues in beta-D-fructofuranosides.. Its pathway is glycan biosynthesis; sucrose metabolism. The chain is Sucrose-6-phosphate hydrolase (sacA) from Zymomonas mobilis subsp. mobilis (strain ATCC 31821 / ZM4 / CP4).